Consider the following 166-residue polypeptide: Salivary acidic proline-rich phosphoprotein 1/2 (166 aa).

The N-terminal stretch at 1 to 16 is a signal peptide; sequence MLLILLSVALLAFSSA. The segment at 16 to 166 is disordered; sequence AQDLDEDVSQ…QGPPQGQSPQ (151 aa). Gln17 carries the post-translational modification Pyrrolidone carboxylic acid. The interval 17–46 is inhibits hydroxyapatite formation, binds to hydroxyapatite and calcium; sequence QDLDEDVSQEDVPLVISDGGDSEQFIDEER. Ser24 is modified (phosphoserine; by FAM20C). At Ser33 the chain carries Phosphoserine; alternate. 2 O-linked (GlcA) serine; alternate glycosylation sites follow: Ser33 and Ser38. At Ser38 the chain carries Phosphoserine; by FAM20C; alternate. 2 stretches are compositionally biased toward low complexity: residues 48-61 and 68-82; these read GPPLGGQQSQPSAG and GPQQGPPQQGGQQQQ. Composition is skewed to pro residues over residues 83-111 and 137-159; these read GPPPPQGKPQGPPQQGGHPPPPQGRPQGP and GPPPPPPGKPQGPPPQGGRPQGP.

In terms of processing, proteolytically cleaved; PRP-2, PRP-1, PIF-S and Db-S yield PRP-4, PRP-3 (protein A), PIF-F and Db-F, respectively. Post-translationally, a hexuronic acid was shown to be linked to Ser-33 in about 40% of the polypeptides. Neither the structure of the carbohydrate (whether glucuronic acid or an isomer of), nor the linkage (whether a glycoside or an ester) has been definitely established.

Its subcellular location is the secreted. Its function is as follows. PRP's act as highly potent inhibitors of crystal growth of calcium phosphates. They provide a protective and reparative environment for dental enamel which is important for the integrity of the teeth. The chain is Salivary acidic proline-rich phosphoprotein 1/2 (PRH1) from Homo sapiens (Human).